The primary structure comprises 506 residues: Glycerol kinase (506 aa).

ADP is bound at residue Thr-11. 3 residues coordinate ATP: Thr-11, Ser-12, and Ser-13. Thr-11 provides a ligand contact to sn-glycerol 3-phosphate. Residue Arg-15 coordinates ADP. Positions 81, 82, 133, and 242 each coordinate sn-glycerol 3-phosphate. Residues Arg-81, Glu-82, Tyr-133, Asp-242, and Gln-243 each coordinate glycerol. ADP contacts are provided by Thr-264 and Gly-316. 4 residues coordinate ATP: Thr-264, Gly-316, Gln-320, and Gly-421. 2 residues coordinate ADP: Gly-421 and Asn-425.

It belongs to the FGGY kinase family.

It catalyses the reaction glycerol + ATP = sn-glycerol 3-phosphate + ADP + H(+). The protein operates within polyol metabolism; glycerol degradation via glycerol kinase pathway; sn-glycerol 3-phosphate from glycerol: step 1/1. Its activity is regulated as follows. Inhibited by fructose 1,6-bisphosphate (FBP). Its function is as follows. Key enzyme in the regulation of glycerol uptake and metabolism. Catalyzes the phosphorylation of glycerol to yield sn-glycerol 3-phosphate. The chain is Glycerol kinase from Paracidovorax citrulli (strain AAC00-1) (Acidovorax citrulli).